A 284-amino-acid polypeptide reads, in one-letter code: Non-selective voltage-gated ion channel VDAC3 (284 aa).

The residue at position 2 (Cys-2) is an N-acetylcysteine. Thr-4 carries the post-translational modification Phosphothreonine. Lys-12, Lys-15, and Lys-20 each carry N6-acetyllysine. 2 beta stranded membrane-spanning segments follow: residues 26 to 35 and 39 to 48; these read MVKIDLKTKS and VMEFSTSGHA. Lys-54 participates in a covalent cross-link: Glycyl lysine isopeptide (Lys-Gly) (interchain with G-Cter in ubiquitin). The next 3 membrane-spanning stretches (beta stranded) occupy residues 55–65, 70–77, and 81–90; these read ASGNLETKYKV, LTFTQKWN, and TLGTEISWEN. The residue at position 91 (Lys-91) is an N6-acetyllysine. A beta stranded membrane pass occupies residues 96–105; that stretch reads LKLTLDTIFV. Residues Lys-110 and Lys-111 each participate in a glycyl lysine isopeptide (Lys-Gly) (interchain with G-Cter in ubiquitin) cross-link. 10 beta stranded membrane-spanning segments follow: residues 112–121, 124–131, 138–146, 151–159, 164–176, 179–186, 190–199, 203–212, 219–228, and 232–239; these read SGKLKASYKR, FSVGSNVD, TIYGWAVLA, LAGYQMSFD, KLSQ…GYKA, FQLHTHVN, EFGGSIYQKV, IETSINLAWT, RFGIAAKYML, and TSLSAKVN. A Phosphoserine modification is found at Ser-242. NAD(+)-binding positions include 243–245 and 261–265; these read LIG and SALID. 2 beta stranded membrane-spanning segments follow: residues 243–252 and 255–264; these read LIGLGYTQTL and GVKLTLSALI. At Lys-267 the chain carries N6-acetyllysine; alternate. Residue Lys-267 forms a Glycyl lysine isopeptide (Lys-Gly) (interchain with G-Cter in ubiquitin); alternate linkage. The beta stranded transmembrane segment at 274–283 threads the bilayer; sequence HKVGLGFELE.

This sequence belongs to the eukaryotic mitochondrial porin family. Interacts with ARMC12 in a TBC1D21-dependent manner. Interacts with MISFA. Ubiquitinated by PRKN during mitophagy, leading to its degradation and enhancement of mitophagy. Deubiquitinated by USP30.

It localises to the mitochondrion outer membrane. The protein resides in the membrane. It catalyses the reaction chloride(in) = chloride(out). The enzyme catalyses K(+)(in) = K(+)(out). In terms of biological role, non-selective voltage-gated ion channel that mediates the transport of anions and cations through the mitochondrion outer membrane and plasma membrane. Forms a high-conducting channel with a stable open state and a voltage-induced closure with a mild preference for anions over cations. Involved in male fertility and sperm mitochondrial sheath formation. The protein is Non-selective voltage-gated ion channel VDAC3 of Pongo abelii (Sumatran orangutan).